The following is a 589-amino-acid chain: Mediator of RNA polymerase II transcription subunit 26 (589 aa).

The TFIIS N-terminal domain occupies 10–87 (QMRDRLLQAI…RNWQKLIEPG (78 aa)). Disordered stretches follow at residues 83–233 (LIEP…TKLP), 247–320 (ARVD…DGPS), and 363–441 (LETK…PIPE). Basic and acidic residues predominate over residues 190-213 (LLEKDDEVPSDRIRLEHLDNDRHN). The segment covering 259-268 (SPRYSSSPRS) has biased composition (low complexity). Positions 276 to 297 (KRSTTYAPKGTLSSPSLNSAQV) are enriched in polar residues. Basic and acidic residues-rich tracts occupy residues 398–412 (SEDRTKPRLKERRLT) and 424–435 (TPKESHQEEECH).

It belongs to the Mediator complex subunit 26 family. Component of the Mediator complex.

It is found in the nucleus. Component of the Mediator complex, a coactivator involved in the regulated transcription of nearly all RNA polymerase II-dependent genes. Mediator functions as a bridge to convey information from gene-specific regulatory proteins to the basal RNA polymerase II transcription machinery. Mediator is recruited to promoters by direct interactions with regulatory proteins and serves as a scaffold for the assembly of a functional preinitiation complex with RNA polymerase II and the general transcription factors. The sequence is that of Mediator of RNA polymerase II transcription subunit 26 (med26) from Danio rerio (Zebrafish).